The following is a 256-amino-acid chain: Dihydroorotate dehydrogenase B (NAD(+)), electron transfer subunit (256 aa).

The FAD-binding FR-type domain occupies 2 to 100 (IRLETMKVVA…MGPQGNGFDL (99 aa)). FAD contacts are provided by residues 51-54 (RPIS), 68-70 (IYR), and 75-76 (GT). [2Fe-2S] cluster-binding residues include Cys-220, Cys-225, Cys-228, and Cys-243.

It belongs to the PyrK family. As to quaternary structure, heterotetramer of 2 PyrK and 2 PyrD type B subunits. [2Fe-2S] cluster is required as a cofactor. Requires FAD as cofactor.

It functions in the pathway pyrimidine metabolism; UMP biosynthesis via de novo pathway; orotate from (S)-dihydroorotate (NAD(+) route): step 1/1. Its function is as follows. Responsible for channeling the electrons from the oxidation of dihydroorotate from the FMN redox center in the PyrD type B subunit to the ultimate electron acceptor NAD(+). This chain is Dihydroorotate dehydrogenase B (NAD(+)), electron transfer subunit, found in Streptococcus pneumoniae (strain ATCC BAA-255 / R6).